The sequence spans 335 residues: Probable phosphoglycerate mutase ARB_03491 (335 aa).

Residues 1-24 (MAGRILLGLTLLATSLPLLAMGDA) form the signal peptide. His-108 serves as the catalytic Tele-phosphohistidine intermediate. The Proton donor/acceptor role is filled by Glu-211.

This sequence belongs to the phosphoglycerate mutase family.

It localises to the secreted. Functionally, probable phosphomutase that may have a function related to the manipulation of phosphate groups on carbohydrates. This Arthroderma benhamiae (strain ATCC MYA-4681 / CBS 112371) (Trichophyton mentagrophytes) protein is Probable phosphoglycerate mutase ARB_03491.